The sequence spans 566 residues: ALBINO3-like protein 3, mitochondrial (566 aa).

The transit peptide at 1–44 directs the protein to the mitochondrion; the sequence is MAFRRVLLSHLRRSHHTCSSLSPHHVSATTQPSIALALFQSRFF. The next 4 helical transmembrane spans lie at 139 to 159, 207 to 227, 249 to 269, and 301 to 321; these read WVVI…ILIL, LWVP…ITSI, LTEI…AGLH, and LLTC…LLYW. TPR repeat units follow at residues 386–419, 420–453, 465–498, and 507–540; these read PKEL…DPEY, LQAM…LLDT, IVAS…KEPD, and LDAL…DPSF. The segment at 547 to 566 is disordered; that stretch reads CEEDDTIPTSSSSNSTSKTS. Over residues 555–566 the composition is skewed to low complexity; the sequence is TSSSSNSTSKTS.

It belongs to the OXA1/ALB3/YidC (TC 2.A.9.2) family.

The protein resides in the mitochondrion inner membrane. Probably required for the insertion of integral membrane proteins into the mitochondrial inner membrane. The protein is ALBINO3-like protein 3, mitochondrial (ALB3L3) of Arabidopsis thaliana (Mouse-ear cress).